A 579-amino-acid chain; its full sequence is Moesin a (579 aa).

The region spanning 5–295 (ISVRVTTMDA…GNHELYMRRR (291 aa)) is the FERM domain. The stretch at 306–448 (KAQAKEEKNH…EDEALEWQTK (143 aa)) forms a coiled coil. 3 disordered regions span residues 308 to 341 (QAKE…EKIE), 376 to 418 (EQER…EHLA), and 464 to 519 (KNKV…KNER). Residues 376-400 (EQERKRAQEEAERLERERRLAEEAK) are compositionally biased toward basic and acidic residues. Positions 490 to 501 (AEASAELTSAAA) are enriched in low complexity. Positions 502–519 (YKDRSEEERMTEAEKNER) are enriched in basic and acidic residues. The stretch at 517–551 (NERVQKHLLALTSELANARDETKKTQNDIIHAENV) forms a coiled coil.

Its subcellular location is the cell membrane. The protein resides in the cell junction. Positively regulates endothelial adherens junction formation and stabilization. Is thereby required for intersegmental vessel luminal membrane formation and stabilization during tubulogenesis in the early stages of development, independent of blood flow dynamics. This chain is Moesin a, found in Danio rerio (Zebrafish).